The sequence spans 531 residues: MDNRIKTVVILGGGTAGWMTAAYLGKALQNTVKIVVLEAPTIPRIGVGEATVPNLQRAFFDYLGIPEEEWMRECNASYKMAVKFINWRTPGEGSPDPRTLDDGHTDTFHHPFGLLPSADQIPLSHYWAAKRLQGETDENFDEACFADTAIMNAKKAPRFLDMRRATNYAWHFDASKVAAFLRNFAVTKQAVEHVEDEMTEVLTDERGFITALRTKSGRILQGDLFVDCSGFRGLLINKAMEEPFIDMSDHLLCNSAVATAVPHDDEKNGVEPYTSSIAMEAGWTWKIPMLGRFGSGHVYSDHFATQDEATLAFSKLWGLDPDNTEFNHVRFRVGRNRRAWVRNCVSVGLASCFVEPLESSGIYFIYAAIHMLAKHFPDKTFDKVLVDRFNREIEEMFDDTRDFLQAHYYFSPRVDTPFWRANKELKLADSIKDKVETYRAGLPVNLPVTDEGTYYGNFEAEFRNFWTNGSYYCIFAGLGLMPRNPLPALAYKPQSIAEAELLFADVKRKGDTLVESLPSTYDLLRQLHGAS.

The FAD site is built by G13, T15, A16, A39, I42, I45, V47, and A50. The active site involves K79. Residue P111 participates in L-tryptophan binding. Positions 198 and 349 each coordinate FAD. Residues S360 and G361 each contribute to the chloride site. Position 362 (I362) interacts with FAD. Y454, Y455, E461, and F465 together coordinate L-tryptophan.

It belongs to the flavin-dependent halogenase family. Bacterial tryptophan halogenase subfamily. As to quaternary structure, homodimer. Monomer in solution.

The catalysed reaction is L-tryptophan + FADH2 + chloride + O2 = 6-chloro-L-tryptophan + FAD + 2 H2O. It catalyses the reaction D-tryptophan + FADH2 + chloride + O2 = 6-chloro-D-tryptophan + FAD + 2 H2O. Functionally, involved in the biosynthesis of thienodolin, a plant growth-regulating compound. Catalyzes the chlorination of tryptophan (Trp) at C6 position to yield 6-chloro-tryptophan. It is also able to use bromide ions to generate monobrominated Trp. In vitro, accepts a wide range of amides and peptides carrying either L- or D-Trp at the N-terminus. This chain is Tryptophan 6-halogenase ThaL, found in Streptomyces albogriseolus.